The chain runs to 82 residues: ATP synthase subunit c, chloroplastic (82 aa).

Transmembrane regions (helical) follow at residues 4–24 (IISA…AIGP) and 57–77 (LAFM…LLFA).

The protein belongs to the ATPase C chain family. In terms of assembly, F-type ATPases have 2 components, F(1) - the catalytic core - and F(0) - the membrane proton channel. F(1) has five subunits: alpha(3), beta(3), gamma(1), delta(1), epsilon(1). F(0) has four main subunits: a(1), b(1), b'(1) and c(10-14). The alpha and beta chains form an alternating ring which encloses part of the gamma chain. F(1) is attached to F(0) by a central stalk formed by the gamma and epsilon chains, while a peripheral stalk is formed by the delta, b and b' chains.

It localises to the plastid. The protein localises to the chloroplast thylakoid membrane. In terms of biological role, f(1)F(0) ATP synthase produces ATP from ADP in the presence of a proton or sodium gradient. F-type ATPases consist of two structural domains, F(1) containing the extramembraneous catalytic core and F(0) containing the membrane proton channel, linked together by a central stalk and a peripheral stalk. During catalysis, ATP synthesis in the catalytic domain of F(1) is coupled via a rotary mechanism of the central stalk subunits to proton translocation. Key component of the F(0) channel; it plays a direct role in translocation across the membrane. A homomeric c-ring of between 10-14 subunits forms the central stalk rotor element with the F(1) delta and epsilon subunits. The sequence is that of ATP synthase subunit c, chloroplastic from Heterosigma akashiwo (strain NIES-293 / 8280G21-1).